A 258-amino-acid chain; its full sequence is Regulatory protein RecX (258 aa).

It belongs to the RecX family.

Its subcellular location is the cytoplasm. Its function is as follows. Modulates RecA activity. This Streptococcus pyogenes serotype M3 (strain ATCC BAA-595 / MGAS315) protein is Regulatory protein RecX.